Consider the following 427-residue polypeptide: Serine--tRNA ligase (427 aa).

L-serine is bound at residue 231-233; sequence TAE. Residue 262-264 participates in ATP binding; sequence RSE. Residue Glu285 participates in L-serine binding. ATP is bound at residue 349–352; it reads EISS. Ser385 serves as a coordination point for L-serine.

Belongs to the class-II aminoacyl-tRNA synthetase family. Type-1 seryl-tRNA synthetase subfamily. As to quaternary structure, homodimer. The tRNA molecule binds across the dimer.

Its subcellular location is the cytoplasm. It carries out the reaction tRNA(Ser) + L-serine + ATP = L-seryl-tRNA(Ser) + AMP + diphosphate + H(+). It catalyses the reaction tRNA(Sec) + L-serine + ATP = L-seryl-tRNA(Sec) + AMP + diphosphate + H(+). It functions in the pathway aminoacyl-tRNA biosynthesis; selenocysteinyl-tRNA(Sec) biosynthesis; L-seryl-tRNA(Sec) from L-serine and tRNA(Sec): step 1/1. Its function is as follows. Catalyzes the attachment of serine to tRNA(Ser). Is also able to aminoacylate tRNA(Sec) with serine, to form the misacylated tRNA L-seryl-tRNA(Sec), which will be further converted into selenocysteinyl-tRNA(Sec). The chain is Serine--tRNA ligase from Listeria innocua serovar 6a (strain ATCC BAA-680 / CLIP 11262).